Here is a 339-residue protein sequence, read N- to C-terminus: Phosphate acyltransferase (339 aa).

It belongs to the PlsX family. Homodimer. Probably interacts with PlsY.

It is found in the cytoplasm. It catalyses the reaction a fatty acyl-[ACP] + phosphate = an acyl phosphate + holo-[ACP]. It participates in lipid metabolism; phospholipid metabolism. Catalyzes the reversible formation of acyl-phosphate (acyl-PO(4)) from acyl-[acyl-carrier-protein] (acyl-ACP). This enzyme utilizes acyl-ACP as fatty acyl donor, but not acyl-CoA. This is Phosphate acyltransferase from Aeromonas salmonicida (strain A449).